A 456-amino-acid chain; its full sequence is Kynurenine 3-monooxygenase (456 aa).

Belongs to the aromatic-ring hydroxylase family. KMO subfamily. Requires FAD as cofactor.

The catalysed reaction is L-kynurenine + NADPH + O2 + H(+) = 3-hydroxy-L-kynurenine + NADP(+) + H2O. It participates in cofactor biosynthesis; NAD(+) biosynthesis; quinolinate from L-kynurenine: step 1/3. In terms of biological role, catalyzes the hydroxylation of L-kynurenine (L-Kyn) to form 3-hydroxy-L-kynurenine (L-3OHKyn). Required for synthesis of quinolinic acid. This chain is Kynurenine 3-monooxygenase, found in Xanthomonas campestris pv. campestris (strain 8004).